The following is a 147-amino-acid chain: Large ribosomal subunit protein uL13 (147 aa).

It belongs to the universal ribosomal protein uL13 family. Part of the 50S ribosomal subunit.

This protein is one of the early assembly proteins of the 50S ribosomal subunit, although it is not seen to bind rRNA by itself. It is important during the early stages of 50S assembly. This is Large ribosomal subunit protein uL13 from Corynebacterium glutamicum (strain R).